A 435-amino-acid chain; its full sequence is Chromosomal replication initiator protein DnaA (435 aa).

The domain I, interacts with DnaA modulators stretch occupies residues 1-70; sequence MNIGEKILLL…KHLFEIQNSI (70 aa). Residues 70–98 are domain II; it reads IKVDVSILLKNQVESKKAEQKSVQKQQHS. Residues 99–313 are domain III, AAA+ region; it reads LLNPSHTFEN…GILSKLHAYS (215 aa). ATP contacts are provided by G143, G145, K146, and T147. The segment at 314-435 is domain IV, binds dsDNA; that stretch reads QLMHVDIDLQ…ELTNKITSSS (122 aa).

It belongs to the DnaA family. In terms of assembly, oligomerizes as a right-handed, spiral filament on DNA at oriC.

Its subcellular location is the cytoplasm. Its function is as follows. Plays an essential role in the initiation and regulation of chromosomal replication. ATP-DnaA binds to the origin of replication (oriC) to initiate formation of the DNA replication initiation complex once per cell cycle. Binds the DnaA box (a 9 base pair repeat at the origin) and separates the double-stranded (ds)DNA. Forms a right-handed helical filament on oriC DNA; dsDNA binds to the exterior of the filament while single-stranded (ss)DNA is stabiized in the filament's interior. The ATP-DnaA-oriC complex binds and stabilizes one strand of the AT-rich DNA unwinding element (DUE), permitting loading of DNA polymerase. After initiation quickly degrades to an ADP-DnaA complex that is not apt for DNA replication. Binds acidic phospholipids. This Sulfurimonas denitrificans (strain ATCC 33889 / DSM 1251) (Thiomicrospira denitrificans (strain ATCC 33889 / DSM 1251)) protein is Chromosomal replication initiator protein DnaA.